A 197-amino-acid polypeptide reads, in one-letter code: Holliday junction branch migration complex subunit RuvA (197 aa).

The segment at 1 to 64 (MYEYIKGKYI…EDFIGVYGFL (64 aa)) is domain I. Positions 65–144 (TKDELSMFKL…DILEEDDEQI (80 aa)) are domain II. Positions 145–149 (INKVT) are flexible linker. Positions 149-197 (TDDKKVLEAVAALVTLGYSEKEANKVINSCDKNNSLEQIIKEALKYLMK) are domain III.

The protein belongs to the RuvA family. In terms of assembly, homotetramer. Forms an RuvA(8)-RuvB(12)-Holliday junction (HJ) complex. HJ DNA is sandwiched between 2 RuvA tetramers; dsDNA enters through RuvA and exits via RuvB. An RuvB hexamer assembles on each DNA strand where it exits the tetramer. Each RuvB hexamer is contacted by two RuvA subunits (via domain III) on 2 adjacent RuvB subunits; this complex drives branch migration. In the full resolvosome a probable DNA-RuvA(4)-RuvB(12)-RuvC(2) complex forms which resolves the HJ.

It is found in the cytoplasm. Its function is as follows. The RuvA-RuvB-RuvC complex processes Holliday junction (HJ) DNA during genetic recombination and DNA repair, while the RuvA-RuvB complex plays an important role in the rescue of blocked DNA replication forks via replication fork reversal (RFR). RuvA specifically binds to HJ cruciform DNA, conferring on it an open structure. The RuvB hexamer acts as an ATP-dependent pump, pulling dsDNA into and through the RuvAB complex. HJ branch migration allows RuvC to scan DNA until it finds its consensus sequence, where it cleaves and resolves the cruciform DNA. The protein is Holliday junction branch migration complex subunit RuvA of Clostridium botulinum (strain Kyoto / Type A2).